Consider the following 348-residue polypeptide: Terpene cyclase ctvD (348 aa).

The chain crosses the membrane as a helical span at residues 2-22; the sequence is ALSAYFLLCLSVLGLDAIYGF. An N-linked (GlcNAc...) asparagine glycan is attached at N51. 7 helical membrane passes run 77-97, 116-136, 161-181, 191-211, 235-255, 283-303, and 323-343; these read PGLS…WVAI, LFAM…WCAI, LIPI…LLPE, QIAI…HWGL, FAFV…LTLI, GLWF…LWAM, and LKVG…WLLW.

It belongs to the membrane-bound ascI terpene cyclase family.

Its subcellular location is the membrane. It participates in mycotoxin biosynthesis. Functionally, hydrolase; part of the gene cluster that mediates the biosynthesis of citreoviridin, an inhibitor of the of F1-ATPase beta-subunit. The HR-PKS ctvA accepts acetyl-CoA as the starter unit and catalyzes eight iterations of malonyl-CoA extension and four iterations of SAM-dependent methylation at C4, C12, C14, and C16. The KR and DH domains selectively act on the first six iterations to generate the hexaene chain. In the last three iterations, the KR and DH domains terminate their functions to yield a beta,delta-diketo ester moiety, which then undergoes intramolecular cyclization to yield an alpha-pyrone intermediate. Subsequently, ctvB methylates the alpha-pyrone hydroxyl group to generate citreomontanin. In order to form the tetrahydrofuran ring with the correct stereochemistry, the terminal alkenes of citreomontanin need to undergo isomerization to yield a (17Z)-hexaene, a step that could be catalyzed by ctvC. The (17Z)-hexaene then undergoes bisepoxidation by ctvC to form a (17R,16R,15S,14R)-bisepoxide moiety. Lastly, ctvD acts as a regioselective hydrolase to form the tetrahydrofuran ring with the substituents in the correct absolute configuration, completing the biosynthesis of citreoviridin. The protein is Terpene cyclase ctvD of Aspergillus terreus (strain NIH 2624 / FGSC A1156).